The following is a 334-amino-acid chain: Protein-methionine-sulfoxide reductase catalytic subunit MsrP (334 aa).

Residues 1-44 (MKKNQFLKESDVTAESVFFMTRRQVLKALGISAAALSLPHAAHA) constitute a signal peptide (tat-type signal). Residues Asn88, 91 to 92 (YE), Cys146, Thr181, Asn233, Arg238, and 249 to 251 (GIK) each bind Mo-molybdopterin.

Belongs to the MsrP family. As to quaternary structure, heterodimer of a catalytic subunit (MsrP) and a heme-binding subunit (MsrQ). Mo-molybdopterin is required as a cofactor. In terms of processing, predicted to be exported by the Tat system. The position of the signal peptide cleavage has not been experimentally proven.

The protein resides in the periplasm. The enzyme catalyses L-methionyl-[protein] + a quinone + H2O = L-methionyl-(S)-S-oxide-[protein] + a quinol. The catalysed reaction is L-methionyl-[protein] + a quinone + H2O = L-methionyl-(R)-S-oxide-[protein] + a quinol. Part of the MsrPQ system that repairs oxidized periplasmic proteins containing methionine sulfoxide residues (Met-O), using respiratory chain electrons. Thus protects these proteins from oxidative-stress damage caused by reactive species of oxygen and chlorine generated by the host defense mechanisms. MsrPQ is essential for the maintenance of envelope integrity under bleach stress, rescuing a wide series of structurally unrelated periplasmic proteins from methionine oxidation, including the primary periplasmic chaperone SurA and the lipoprotein Pal. The catalytic subunit MsrP is non-stereospecific, being able to reduce both (R-) and (S-) diastereoisomers of methionine sulfoxide. This is Protein-methionine-sulfoxide reductase catalytic subunit MsrP from Escherichia coli (strain 55989 / EAEC).